A 49-amino-acid polypeptide reads, in one-letter code: uncharacterized protein (49 aa).

The helical transmembrane segment at 31 to 48 (PDLYTIIVSYFSIFSLFF) threads the bilayer.

The protein localises to the membrane. This is an uncharacterized protein from Saccharomyces cerevisiae (strain ATCC 204508 / S288c) (Baker's yeast).